A 481-amino-acid polypeptide reads, in one-letter code: Cysteine--tRNA ligase (481 aa).

Cysteine 29 provides a ligand contact to Zn(2+). The short motif at 31-41 (VTVYDYCHIGH) is the 'HIGH' region element. Residues cysteine 209, histidine 234, and glutamate 238 each contribute to the Zn(2+) site. A 'KMSKS' region motif is present at residues 266–270 (KMSKS). Lysine 269 serves as a coordination point for ATP.

Belongs to the class-I aminoacyl-tRNA synthetase family. In terms of assembly, monomer. Zn(2+) is required as a cofactor.

It is found in the cytoplasm. It carries out the reaction tRNA(Cys) + L-cysteine + ATP = L-cysteinyl-tRNA(Cys) + AMP + diphosphate. The sequence is that of Cysteine--tRNA ligase from Syntrophotalea carbinolica (strain DSM 2380 / NBRC 103641 / GraBd1) (Pelobacter carbinolicus).